The primary structure comprises 326 residues: Beta-ketoacyl-[acyl-carrier-protein] synthase III (326 aa).

Catalysis depends on residues cysteine 111 and histidine 252. The ACP-binding stretch occupies residues 253–257 (QANIR). Asparagine 282 is a catalytic residue.

This sequence belongs to the thiolase-like superfamily. FabH family. As to quaternary structure, homodimer.

Its subcellular location is the plastid. The protein resides in the chloroplast. It catalyses the reaction malonyl-[ACP] + acetyl-CoA + H(+) = 3-oxobutanoyl-[ACP] + CO2 + CoA. The protein operates within lipid metabolism; fatty acid biosynthesis. Functionally, catalyzes the condensation reaction of fatty acid synthesis by the addition to an acyl acceptor of two carbons from malonyl-ACP. Catalyzes the first condensation reaction which initiates fatty acid synthesis and may therefore play a role in governing the total rate of fatty acid production. Possesses both acetoacetyl-ACP synthase and acetyl transacylase activities. Its substrate specificity determines the biosynthesis of branched-chain and/or straight-chain of fatty acids. The chain is Beta-ketoacyl-[acyl-carrier-protein] synthase III from Porphyra umbilicalis (Purple laver).